The chain runs to 604 residues: Pescadillo homolog (604 aa).

Positions 275 to 299 (NSEPAGLIEDKEGEDNKESSKTDES) are disordered. Over residues 282–299 (IEDKEGEDNKESSKTDES) the composition is skewed to basic and acidic residues. The 91-residue stretch at 337–427 (ECRSLFKNLK…IILPTEGYIV (91 aa)) folds into the BRCT domain. Disordered regions lie at residues 518–557 (KTFSNRTADNQPDVVDKSDTKEADDHMEDSHKQAEKDAAD) and 574–604 (IEINQERKKDKVNLLKKRKKNADSSASAKGR). Composition is skewed to basic and acidic residues over residues 531–557 (VVDKSDTKEADDHMEDSHKQAEKDAAD) and 577–586 (NQERKKDKVN).

This sequence belongs to the pescadillo family.

The protein localises to the nucleus. Its subcellular location is the nucleolus. It is found in the nucleoplasm. Required for maturation of ribosomal RNAs and formation of the large ribosomal subunit. The chain is Pescadillo homolog (PES) from Oryza sativa subsp. japonica (Rice).